The sequence spans 246 residues: uncharacterized protein (246 aa).

6 helical membrane passes run 7 to 27, 50 to 70, 99 to 119, 135 to 155, 163 to 183, and 219 to 239; these read KVTL…ALII, LNIL…SMEF, VSFY…LLFF, LALI…GLLC, AVAV…VQLM, and FSIG…WWCF.

It is found in the cell membrane. This is an uncharacterized protein from Bacillus subtilis (strain 168).